The following is a 496-amino-acid chain: Cytochrome P450 71D181 (496 aa).

A helical; Signal-anchor for type II membrane protein transmembrane segment spans residues 1 to 21; it reads MDISISWVAIILVISSYFIFM. Cys-435 contributes to the heme binding site. The disordered stretch occupies residues 471–496; it reads MSETPGLSGPRKNPLIMVPTIHNPTS.

It belongs to the cytochrome P450 family. Heme is required as a cofactor. As to expression, expressed at low levels in flowers, leaves and stems.

Its subcellular location is the membrane. It catalyses the reaction alpha-terpinene + 2 reduced [NADPH--hemoprotein reductase] + 2 O2 = carvacrol + 2 oxidized [NADPH--hemoprotein reductase] + 3 H2O + 2 H(+). It carries out the reaction gamma-terpinene + 2 reduced [NADPH--hemoprotein reductase] + 2 O2 = carvacrol + 2 oxidized [NADPH--hemoprotein reductase] + 3 H2O + 2 H(+). The enzyme catalyses (4S)-limonene + reduced [NADPH--hemoprotein reductase] + O2 = (1S,5R)-carveol + oxidized [NADPH--hemoprotein reductase] + H2O + H(+). The catalysed reaction is (4R)-limonene + reduced [NADPH--hemoprotein reductase] + O2 = (1R,5S)-carveol + oxidized [NADPH--hemoprotein reductase] + H2O + H(+). It functions in the pathway secondary metabolite biosynthesis; terpenoid biosynthesis. Its function is as follows. Involved in the biosynthesis of phenolic monoterpenes natural products thymol and carvacrol which have a broad range of biological activities acting as antimicrobial compounds, insecticides, antioxidants and pharmaceutical agents. Catalyzes the C2-hydroxylation of gamma-terpinene and alpha-terpinene to produce carvacrol. Also mediates the C6-hydroxylation of (4S)-limonene and (4R)-limonene to form carveol. The chain is Cytochrome P450 71D181 from Origanum vulgare (Wild marjoram).